The sequence spans 535 residues: Glucan 1,6-alpha-glucosidase (535 aa).

Aspartate 194 (nucleophile) is an active-site residue. The active-site Proton donor is the glutamate 236.

This sequence belongs to the glycosyl hydrolase 13 family.

It localises to the cytoplasm. The enzyme catalyses Hydrolysis of (1-&gt;6)-alpha-D-glucosidic linkages in (1-&gt;6)-alpha-D-glucans and derived oligosaccharides.. In terms of biological role, the physiological substrates may be short isomaltosaccharides. This chain is Glucan 1,6-alpha-glucosidase (dexB), found in Streptococcus pneumoniae serotype 4 (strain ATCC BAA-334 / TIGR4).